The chain runs to 667 residues: MTAYSPADSNAEARLLSGGSDPISDTENLLDLAYEVGTSSSDNTRYDRESENDEEEIGVGWEDTTSSSLNKRMCKSATFHDFCDDSEYSRRPVTTLHEEDFDEEEEDEFEDASDRRNLDEDDVEYEDEDDEDDIVVEEEEITPEDIEHSPTGVTTQTTPPSNNTSKSKKKKKRKSDEEDGLRKMKKSSTFASFLNMFVSRRRSGRDSGERLMSRSTCMLRPSISLSVVQESMILGSDGESVEVSPCTSDQTPTGVPPRYIVNVKMRQKTARKWSEEEIQKRLSLPADLRLPVAVVDKLNRTPTLDQPLTRKNRRASLSEIGFGKLETYEKLDKLGEGTYATVFRGRSILTNKFVALKEIRLEQEEGAPCTAIREVSLLRNLRHANVVTLHDIIHTDRLLTLVFEYVDRDLKQYMDSCNNAMQMNNIRLFLYQLLRGLAYCHQRRVLHRDLKPQNLLITAKGELKLADFGLARAKSVPTKTYSNEVVTLWYRPPDVLLGSTDYSTHIDMWGVGCILFEMIAGRALFPGGTPTEQLGLIFRTLGSPRPDRHPTICEKPTFYPYANRHYNPDPLCRQIPRIDAHGFELLMKFLQYEGKDRVSAAEAVKHPFLRTIAVKCCHLRDEQSVLEADGIHIERELLASDHHHSSRRHHRGTLVKDKYRMHSSHHT.

Disordered stretches follow at residues 1–70 (MTAY…SSLN) and 85–184 (DSEY…LRKM). Acidic residues-rich tracts occupy residues 99 to 111 (EDFD…EFED) and 119 to 144 (DEDD…ITPE). A compositionally biased stretch (polar residues) spans 151-164 (TGVTTQTTPPSNNT). One can recognise a Protein kinase domain in the interval 328–609 (YEKLDKLGEG…AAEAVKHPFL (282 aa)). Residues 334–342 (LGEGTYATV) and lysine 357 each bind ATP. Aspartate 449 serves as the catalytic Proton acceptor. Residues asparagine 454 and aspartate 467 each contribute to the Mg(2+) site. Positions 642-667 (HHHSSRRHHRGTLVKDKYRMHSSHHT) are disordered. Over residues 644 to 653 (HSSRRHHRGT) the composition is skewed to basic residues.

This sequence belongs to the protein kinase superfamily. CMGC Ser/Thr protein kinase family. CDC2/CDKX subfamily. Interacts with cyy-1; the interaction is required to activate pct-1. Mg(2+) serves as cofactor.

It is found in the cytoplasm. The protein localises to the cell projection. Its subcellular location is the dendrite. The protein resides in the axon. The catalysed reaction is L-seryl-[protein] + ATP = O-phospho-L-seryl-[protein] + ADP + H(+). The enzyme catalyses L-threonyl-[protein] + ATP = O-phospho-L-threonyl-[protein] + ADP + H(+). Functionally, serine/threonine-protein kinase, which, in association with cyy-1, regulates the trafficking of synaptic vesicles in the DA9 motor neuron and probably also in the DD motor neurons and in RIA interneurons. Its function is as follows. Sufficient for synaptic vesicle trafficking in the DA9 motor neuron. In Caenorhabditis elegans, this protein is Cyclin-dependent kinase 17.